A 423-amino-acid chain; its full sequence is D-tagatose-1,6-bisphosphate aldolase subunit GatZ (423 aa).

Belongs to the GatZ/KbaZ family. GatZ subfamily. As to quaternary structure, forms a complex with GatY.

It participates in carbohydrate metabolism; D-tagatose 6-phosphate degradation; D-glyceraldehyde 3-phosphate and glycerone phosphate from D-tagatose 6-phosphate: step 2/2. Functionally, component of the tagatose-1,6-bisphosphate aldolase GatYZ that is required for full activity and stability of the Y subunit. Could have a chaperone-like function for the proper and stable folding of GatY. When expressed alone, GatZ does not show any aldolase activity. Is involved in the catabolism of galactitol. This Salmonella typhimurium (strain LT2 / SGSC1412 / ATCC 700720) protein is D-tagatose-1,6-bisphosphate aldolase subunit GatZ.